The chain runs to 119 residues: Ghilanten (119 aa).

A Pyrrolidone carboxylic acid modification is found at Q1. 10 cysteine pairs are disulfide-bonded: C8–C19, C13–C26, C28–C48, C33–C51, C37–C53, C62–C73, C67–C80, C82–C103, C88–C106, and C92–C108. In terms of domain architecture, Antistasin-like 1 spans 28–53 (CPEVRCRVYCSHGFQRSRYGCEVCRC). Positions 83–108 (KIDINCRKTCPNGLKRDKLGCEYCEC) constitute an Antistasin-like 2 domain. Heparin contacts are provided by residues 97–100 (KRDK) and 111–118 (KRKLVPRL).

This sequence belongs to the protease inhibitor I15 (antistasin) family.

It is found in the secreted. Functionally, this highly disulfide-bonded protein is a potent inhibitor of factor Xa. May have therapeutic utility as an anticoagulant. Also exhibits a strong metastatic activity. The chain is Ghilanten from Haementeria ghilianii (Amazon leech).